A 454-amino-acid chain; its full sequence is Epsin-1 (454 aa).

An ENTH domain is found at 11–143; sequence NLVKGYSSTQ…SDDERLNEER (133 aa). 2 disordered regions span residues 142-195 and 292-350; these read ERNM…EDYE and YLAS…GNQS. Basic residues predominate over residues 149–160; that stretch reads GRNRKGRRRRGT. At Thr-160 the chain carries Phosphothreonine. Ser-163 carries the phosphoserine modification. 2 UIM domains span residues 165–184 and 189–208; these read ENDDDLQRAISASRLTAEED and KQDEDYETALQLSKEEEELK. At Thr-180 the chain carries Phosphothreonine. Residues 180–191 show a composition bias toward basic and acidic residues; sequence TAEEDERRRKQD. The span at 292–302 shows a compositional bias: low complexity; the sequence is YLASMQQQQQA. 2 stretches are compositionally biased toward polar residues: residues 303 to 329 and 340 to 350; these read MSNNPFAKSEQSSSSPKRNQLVAASSP and PLIQNRTGNQS. Phosphoserine is present on Ser-328. Lys-357 participates in a covalent cross-link: Glycyl lysine isopeptide (Lys-Gly) (interchain with G-Cter in ubiquitin). Phosphothreonine occurs at positions 364, 366, 384, 386, and 388. Polar residues predominate over residues 384 to 398; it reads TKTGTFINSQGTGYR. Residues 384–405 form a disordered region; the sequence is TKTGTFINSQGTGYRQVSDDPN. Thr-395 and Thr-415 each carry phosphothreonine; by PRK1. Polar residues predominate over residues 418–428; it reads PSTSVVPTQTG. The segment at 418-454 is disordered; it reads PSTSVVPTQTGYGFGNQSQQQSQNNGSNNRGYTLIDL. Over residues 432–446 the composition is skewed to low complexity; sequence GNQSQQQSQNNGSNN. Positions 447–454 are clathrin-binding; it reads RGYTLIDL.

It belongs to the epsin family. Interacts with EDE1 and PAN1.

The protein resides in the cytoplasm. Its subcellular location is the membrane. Functionally, binds to membranes enriched in phosphatidylinositol 3,5-bisphosphate (PtdIns(3,5)P2) and phosphatidylinositol 4,5-bisphosphate (PtdIns(4,5)P2). Required for endocytosis and localization of actin. Negatively regulated via phosphorylation. This chain is Epsin-1 (ENT1), found in Saccharomyces cerevisiae (strain ATCC 204508 / S288c) (Baker's yeast).